Consider the following 307-residue polypeptide: B3 domain-containing protein At5g18000 (307 aa).

A DNA-binding region (TF-B3 1) is located at residues 20-115 (FFKILRREDH…CFNVTIFEAD (96 aa)). Disordered stretches follow at residues 122 to 141 (PRKTITSSSGRNKREERKSI) and 151 to 209 (IESW…SEAG). Polar residues predominate over residues 166-177 (ESTSGRLTQKQE). The segment covering 178–192 (LNLRKKEADKTEKSK) has biased composition (basic and acidic residues). The segment at residues 214-307 (IPEFKLTIKK…TEMRVKVSKE (94 aa)) is a DNA-binding region (TF-B3 2).

It localises to the nucleus. This Arabidopsis thaliana (Mouse-ear cress) protein is B3 domain-containing protein At5g18000.